A 255-amino-acid chain; its full sequence is Major prion protein (255 aa).

The N-terminal stretch at 1 to 24 is a signal peptide; that stretch reads MVKSHIGSWILVLFVAMWSDVGLC. The tract at residues 25-41 is interaction with ADGRG6; sequence KKRPKPGGGWNTGGSRY. The interaction with GRB2, ERI3 and SYN1 stretch occupies residues 25–232; that stretch reads KKRPKPGGGW…ESEAYYQRGA (208 aa). The segment at 28 to 110 is disordered; that stretch reads PKPGGGWNTG…QWNKPSKPKT (83 aa). Repeat copies occupy residues 54-62, 63-70, 71-78, 79-86, and 87-94. The interval 54 to 94 is 5 X 8 AA tandem repeats of P-H-G-G-G-W-G-Q; it reads PQGGGGWGQPHGGGWGQPHGGGWGQPHGGGWGQPHGGGGWG. Over residues 55–97 the composition is skewed to gly residues; sequence QGGGGWGQPHGGGWGQPHGGGWGQPHGGGWGQPHGGGGWGQGG. Cu(2+) contacts are provided by H64, G65, G66, H72, G73, G74, H80, G81, G82, H88, G90, and G91. N174, N184, and N199 each carry an N-linked (GlcNAc...) asparagine glycan. An intrachain disulfide couples C182 to C216. Residue A232 is the site of GPI-anchor amidated alanine attachment. A propeptide spans 233 to 255 (removed in mature form); sequence SVILFSSPPVILLVSFLIFLIVG.

Belongs to the prion family. As to quaternary structure, monomer and homodimer. Has a tendency to aggregate into amyloid fibrils containing a cross-beta spine, formed by a steric zipper of superposed beta-strands. Soluble oligomers may represent an intermediate stage on the path to fibril formation. Copper binding may promote oligomerization. Interacts with GRB2, APP, ERI3/PRNPIP and SYN1. Mislocalized cytosolically exposed PrP interacts with MGRN1; this interaction alters MGRN1 subcellular location and causes lysosomal enlargement. Interacts with APP. Interacts with KIAA1191. Interacts with ADGRG6.

The protein resides in the cell membrane. The protein localises to the golgi apparatus. In terms of biological role, its primary physiological function is unclear. May play a role in neuronal development and synaptic plasticity. May be required for neuronal myelin sheath maintenance. May promote myelin homeostasis through acting as an agonist for ADGRG6 receptor. May play a role in iron uptake and iron homeostasis. Soluble oligomers are toxic to cultured neuroblastoma cells and induce apoptosis (in vitro). Association with GPC1 (via its heparan sulfate chains) targets PRNP to lipid rafts. Also provides Cu(2+) or Zn(2+) for the ascorbate-mediated GPC1 deaminase degradation of its heparan sulfate side chains. The polypeptide is Major prion protein (PRNP) (Canis lupus familiaris (Dog)).